Consider the following 359-residue polypeptide: MDSNNHLYDPNPTGSGLLRFRSAPSSVLAAFVDDDKIGFDSDRLLSRFVTSNGVNGDLGSPKFEDKSPVSLTNTSVSYAATLPPPPQLEPSSFLGLPPHYPRQSKGIMNSVGLDQFLGINNHHTKPVESNLLRQSSSPAGMFTNLSDQNGYGSMRNLMNYEEDEESPSNSNGLRRHCSLSSRPPSSLGMLSQIPEIAPETNFPYSHWNDPSSFIDNLSSLKREAEDDGKLFLGAQNGESGNRMQLLSHHLSLPKSSSTASDMVSVDKYLQLQDSVPCKIRAKRGCATHPRSIAERVRRTRISERMRKLQELVPNMDKQTNTSDMLDLAVDYIKDLQRQYKILNDNRANCKCMNKEKKSI.

Ser60 is modified (phosphoserine). The disordered stretch occupies residues 161 to 186 (EEDEESPSNSNGLRRHCSLSSRPPSS). Polar residues predominate over residues 167–184 (PSNSNGLRRHCSLSSRPP). The bHLH domain maps to 285-335 (CATHPRSIAERVRRTRISERMRKLQELVPNMDKQTNTSDMLDLAVDYIKDL).

In terms of assembly, homodimer.

It is found in the nucleus. The chain is Transcription factor bHLH130 (BHLH130) from Arabidopsis thaliana (Mouse-ear cress).